The chain runs to 230 residues: MTIIAGTVVKGKQLGRKLGFPTANVDAKIHGLRNGVYGVLATVNHQFHLGVMNIGVKPTVGSNLEKTLEIFLFDFHRDIYGEKIECSILFKIREERRFDSLESLTKQIKKDISCVAKRFELIGIMAPNKKESLLSHQELNLPDLCFYKKCNNLYGVNRGVYNVIDNWFFEYGITQVAYRRIYILSFLSFLKEDNPKVSSKYIRFGAGGLADKLNRFISSYVEESEENILG.

This sequence belongs to the RibR family.

The catalysed reaction is riboflavin + ATP = FMN + ADP + H(+). May be directly involved in the regulation of the rib genes. C-terminal part of RibR specifically binds to RFN of the rib leader of the riboflavin biosynthetic operon. The RFN element is a sequence within the rib-leader mRNA reported to serve as a receptor for an FMN-dependent riboswitch. Possibly, RibR produces the comodulator FMN through its own N-terminal flavokinase activity. FMN-activated RibR may stabilize the anti-anti terminator structure of RFN mRNA, causing transcription termination of the rib genes in trans. This Bacillus subtilis (strain 168) protein is RNA-binding riboflavin kinase RibR (ribR).